The following is an 896-amino-acid chain: MIKFYFTTFHMKFPARLFSTSFTLNNTNIINEKDVKYITKNFLLENSNGFNLIKNIINSDETSEVKQNKIEVELNNIWHTEITDILQKKRSLGLDAIGSSILAKDFHNLIGDIENFINKGRTNKLPGVEYLKPSLIISIVLGKVIPFSLRHSDIFNQPTHSLFAEIGKILKYQSIFELHHRIGLIQNRVEEIKNYTEKKLVSEFNKLTKVLDEYKNTLKNLEELSGESIIKVGLGFTALLSETSEFYSLEEQIIAKNKSIRYIIPKNKLKTLINNITLMDTIELPMIIPPLEWKIDDNEKIIEYGGTILNNKHRIRPLRTKSVENSDANDMTYNKELVDAVNFKSKIPYTINLKILDFITRDEFINRDKKDNVIIYKHIHPDSALLGEYMKDRKNPKISEITTHNSKFLYHSSIISIAKLMKDVKEFYMTVFIDWRGRFYTSSCALNIQGGELARSLLLFKEGQKLNDIGLKALKIYTANAFGLDKRSKEERLDWVEQNLHKIIDIDNYEIWREADEPLLFLACALELKGYNEDPNFISHLPILMDATCNGLQHLSAMVNDFVLAEKVNLLKSTENDNPRDLYSEVIPHIKQEILEASKSYEHTNLERINVERCLVKRGLMTITYGATERGIYDQIVSKFFQKDEWNKTVGLHFVCIDSDIAPKDVVFTQKNILLLSKIIYNSLFKIHPNLNTLMVYFNSIVKVLCELDLPVNWVTPYGLVIQQKYNKFTKYNETTYVASKRYKLVLRKADTTSISKQKQIQAFIPNFVHSMDGSNIVLLINTIRDEGRKINFASIHDCFATHANDTAWLSWYVKQSFIRIYSDSSFLRRFHNYIQLRIQAKYGEDAHFDKDGVLTHVTIDNGTDIPDRIDIPKPLVVNKDNKIYKEILHSEYFIN.

Residues D546, K617, and D798 contribute to the active site.

This sequence belongs to the phage and mitochondrial RNA polymerase family.

Its subcellular location is the mitochondrion. The enzyme catalyses RNA(n) + a ribonucleoside 5'-triphosphate = RNA(n+1) + diphosphate. In terms of biological role, DNA-dependent RNA polymerase catalyzes the transcription of DNA into RNA using the four ribonucleoside triphosphates as substrates. This Neurospora crassa protein is Probable DNA-directed RNA polymerase.